Consider the following 328-residue polypeptide: GATA transcription factor 17 (328 aa).

The disordered stretch occupies residues 1 to 68 (MSGHHEAKPY…EEYEGGEGVP (68 aa)). The segment covering 14 to 29 (RGPAPADEEAAPAAAA) has biased composition (low complexity). Acidic residues-rich tracts occupy residues 30–39 (DEAEAEAEVE) and 47–63 (EQEYEEGEEGEEEEYEG). Residues 100–135 (PHVASNTLTLSFQGEVYVFESVSAERVQAVLLLLGG) form the Tify domain. One can recognise a CCT domain in the interval 161–203 (RMASLMRFREKRKERNFDKKIRYTVRKEVALRMQRNRGQFTSS). The segment at 198–231 (GQFTSSKSKAEEATSVITSSEGSPNWGAVEGRPP) is disordered. The segment at 236-263 (CHHCGISAASTPMMRRGPDGPRTLCNAC) adopts a GATA-type zinc-finger fold.

It belongs to the type IV zinc-finger family. Class C subfamily.

The protein localises to the nucleus. In terms of biological role, transcriptional activator that specifically binds 5'-GATA-3' or 5'-GAT-3' motifs within gene promoters. The sequence is that of GATA transcription factor 17 from Oryza sativa subsp. japonica (Rice).